We begin with the raw amino-acid sequence, 86 residues long: Cyclin-dependent kinase inhibitor 6 (86 aa).

The segment covering 1–15 has biased composition (low complexity); sequence MAAAAATVTAVQPAA. The segment at 1 to 23 is disordered; the sequence is MAAAAATVTAVQPAASSCGKRDG.

Belongs to the CDI family. ICK/KRP subfamily.

This Oryza sativa subsp. japonica (Rice) protein is Cyclin-dependent kinase inhibitor 6 (KRP6).